A 141-amino-acid polypeptide reads, in one-letter code: Hemoglobin subunit alpha-A (141 aa).

Positions 1 to 141 (VLSSHDKSNV…VGTVLTAKYR (141 aa)) constitute a Globin domain. Histidine 58 is an O2 binding site. A heme b-binding site is contributed by histidine 87.

Belongs to the globin family. In terms of assembly, heterotetramer of two alpha chains and two beta chains. In terms of tissue distribution, red blood cells.

Its function is as follows. Involved in oxygen transport from the lung to the various peripheral tissues. This chain is Hemoglobin subunit alpha-A (HBAA), found in Phoenicopterus ruber (American flamingo).